The chain runs to 283 residues: Eukaryotic translation initiation factor 3 subunit K (283 aa).

Positions 52–263 (YDLLANLAIL…EIKATVIREE (212 aa)) constitute a PCI domain. Residues 114 to 135 (EATTTDADNAGSLSGDDDDDEV) form a disordered region.

This sequence belongs to the eIF-3 subunit K family. As to quaternary structure, component of the eukaryotic translation initiation factor 3 (eIF-3) complex.

The protein localises to the cytoplasm. In terms of biological role, component of the eukaryotic translation initiation factor 3 (eIF-3) complex, which is involved in protein synthesis of a specialized repertoire of mRNAs and, together with other initiation factors, stimulates binding of mRNA and methionyl-tRNAi to the 40S ribosome. The eIF-3 complex specifically targets and initiates translation of a subset of mRNAs involved in cell proliferation. This chain is Eukaryotic translation initiation factor 3 subunit K, found in Mycosarcoma maydis (Corn smut fungus).